Here is a 949-residue protein sequence, read N- to C-terminus: Multimerin-2 (949 aa).

A signal peptide spans Met1–Ala22. In terms of domain architecture, EMI spans Gly54–His132. 3 cysteine pairs are disulfide-bonded: Cys58/Cys122, Cys85/Cys92, and Cys121/Cys130. Residue Ser63 is glycosylated (O-linked (Fuc...) serine). Thr67 is a glycosylation site (O-linked (Fuc) threonine). O-linked (Fuc) threonine glycosylation occurs at Thr115. The interval His133–Ser157 is disordered. A coiled-coil region spans residues Ile167 to Asp187. N-linked (GlcNAc...) asparagine glycosylation is found at Asn205, Asn214, Asn249, Asn261, Asn350, Asn379, Asn439, and Asn472. Coiled coils occupy residues Lys292 to Lys487, Val547 to Phe596, and Glu688 to Val711. 2 N-linked (GlcNAc...) asparagine glycosylation sites follow: Asn727 and Asn765. Residues Arg779–Pro801 form a disordered region. Residues Gln784 to Glu800 are compositionally biased toward basic and acidic residues. Residues Glu821–Thr949 form the C1q domain. Asn845 carries an N-linked (GlcNAc...) asparagine glycan.

Heteromer of p110, p125, p140 and p200 subunits; disulfide-linked. Interacts with VEGFA. Interacts with CD93; this interaction promotes angiogenesis. Interacts with CD248. N- and O-glycosylated. Post-translationally, O-fucosylated within the EMI domain (at Ser-63, Thr-67 and Thr-115) by FUT10/POFUT3 and FUT11/POFUT4. In terms of processing, processed by matrix metalloproteinases (MMPs) including MMP9 and, to a lesser degree, by MMP2 upon angiogenic stimulation. Endothelium.

The protein localises to the secreted. It is found in the extracellular space. The protein resides in the extracellular matrix. Functionally, extracellular matrix protein that plays significant roles in the vascular system and is required for the maintenance and stability of blood vessel. Affects several essential steps in angiogenesis including endothelial cell proliferation, migration, and tube formation. Positively regulates angiogenesis by acting as a ligand for CD93 receptor. The sequence is that of Multimerin-2 (MMRN2) from Homo sapiens (Human).